The primary structure comprises 668 residues: Transketolase 2 (668 aa).

Substrate is bound at residue histidine 26. Residues histidine 66 and 114–116 (GPL) contribute to the thiamine diphosphate site. Aspartate 155 lines the Mg(2+) pocket. Thiamine diphosphate is bound by residues glycine 156 and asparagine 185. Residues asparagine 185 and isoleucine 187 each coordinate Mg(2+). Residues histidine 261, arginine 358, and serine 385 each coordinate substrate. Histidine 261 contributes to the thiamine diphosphate binding site. The active-site Proton donor is glutamate 413. Residue phenylalanine 439 participates in thiamine diphosphate binding. Residues histidine 463, aspartate 471, and arginine 522 each contribute to the substrate site.

This sequence belongs to the transketolase family. In terms of assembly, homodimer. The cofactor is Mg(2+). Ca(2+) is required as a cofactor. It depends on Mn(2+) as a cofactor. Co(2+) serves as cofactor. Requires thiamine diphosphate as cofactor.

The enzyme catalyses D-sedoheptulose 7-phosphate + D-glyceraldehyde 3-phosphate = aldehydo-D-ribose 5-phosphate + D-xylulose 5-phosphate. In terms of biological role, catalyzes the transfer of a two-carbon ketol group from a ketose donor to an aldose acceptor, via a covalent intermediate with the cofactor thiamine pyrophosphate. In Pasteurella multocida (strain Pm70), this protein is Transketolase 2 (tktB).